The chain runs to 186 residues: ATP synthase subunit delta (186 aa).

It belongs to the ATPase delta chain family. As to quaternary structure, F-type ATPases have 2 components, F(1) - the catalytic core - and F(0) - the membrane proton channel. F(1) has five subunits: alpha(3), beta(3), gamma(1), delta(1), epsilon(1). F(0) has three main subunits: a(1), b(2) and c(10-14). The alpha and beta chains form an alternating ring which encloses part of the gamma chain. F(1) is attached to F(0) by a central stalk formed by the gamma and epsilon chains, while a peripheral stalk is formed by the delta and b chains.

Its subcellular location is the cell inner membrane. Functionally, f(1)F(0) ATP synthase produces ATP from ADP in the presence of a proton or sodium gradient. F-type ATPases consist of two structural domains, F(1) containing the extramembraneous catalytic core and F(0) containing the membrane proton channel, linked together by a central stalk and a peripheral stalk. During catalysis, ATP synthesis in the catalytic domain of F(1) is coupled via a rotary mechanism of the central stalk subunits to proton translocation. This protein is part of the stalk that links CF(0) to CF(1). It either transmits conformational changes from CF(0) to CF(1) or is implicated in proton conduction. The protein is ATP synthase subunit delta of Nitrobacter hamburgensis (strain DSM 10229 / NCIMB 13809 / X14).